A 501-amino-acid chain; its full sequence is Maturase K (501 aa).

This sequence belongs to the intron maturase 2 family. MatK subfamily.

It is found in the plastid. The protein localises to the chloroplast. Its function is as follows. Usually encoded in the trnK tRNA gene intron. Probably assists in splicing its own and other chloroplast group II introns. The sequence is that of Maturase K from Amborella trichopoda.